Here is a 368-residue protein sequence, read N- to C-terminus: DNA replication and repair protein RecF (368 aa).

ATP is bound at residue 30–37 (GNNAQGKT).

It belongs to the RecF family.

The protein resides in the cytoplasm. Functionally, the RecF protein is involved in DNA metabolism; it is required for DNA replication and normal SOS inducibility. RecF binds preferentially to single-stranded, linear DNA. It also seems to bind ATP. The chain is DNA replication and repair protein RecF from Streptococcus pyogenes serotype M6 (strain ATCC BAA-946 / MGAS10394).